The chain runs to 337 residues: Glyceraldehyde-3-phosphate dehydrogenase 1, cytosolic (337 aa).

Positions 1 to 151 (MGKIKIGING…YTSDVNIVSN (151 aa)) are binding to NAD. NAD(+) contacts are provided by residues 13-14 (RI), Asp35, and Arg82. Residues 152–337 (ASCTTNCLAP…DLIRHMFKTQ (186 aa)) form a catalytic region. Residues 153 to 155 (SCT), Thr184, 213 to 214 (TG), and Arg236 contribute to the D-glyceraldehyde 3-phosphate site. Cys154 acts as the Nucleophile in catalysis. Asn318 contacts NAD(+).

The protein belongs to the glyceraldehyde-3-phosphate dehydrogenase family. In terms of assembly, homotetramer.

Its subcellular location is the cytoplasm. It catalyses the reaction D-glyceraldehyde 3-phosphate + phosphate + NAD(+) = (2R)-3-phospho-glyceroyl phosphate + NADH + H(+). Its pathway is carbohydrate degradation; glycolysis; pyruvate from D-glyceraldehyde 3-phosphate: step 1/5. Key enzyme in glycolysis that catalyzes the first step of the pathway by converting D-glyceraldehyde 3-phosphate (G3P) into 3-phospho-D-glyceroyl phosphate. Essential for the maintenance of cellular ATP levels and carbohydrate metabolism. This Zea mays (Maize) protein is Glyceraldehyde-3-phosphate dehydrogenase 1, cytosolic (GAPC1).